We begin with the raw amino-acid sequence, 313 residues long: Ribosomal RNA small subunit methyltransferase H (313 aa).

Residues 35 to 37 (GGH), Asp55, Phe79, Asp101, and Gln108 contribute to the S-adenosyl-L-methionine site.

Belongs to the methyltransferase superfamily. RsmH family.

It localises to the cytoplasm. It carries out the reaction cytidine(1402) in 16S rRNA + S-adenosyl-L-methionine = N(4)-methylcytidine(1402) in 16S rRNA + S-adenosyl-L-homocysteine + H(+). In terms of biological role, specifically methylates the N4 position of cytidine in position 1402 (C1402) of 16S rRNA. The protein is Ribosomal RNA small subunit methyltransferase H of Erwinia tasmaniensis (strain DSM 17950 / CFBP 7177 / CIP 109463 / NCPPB 4357 / Et1/99).